Here is a 215-residue protein sequence, read N- to C-terminus: 3-isopropylmalate dehydratase small subunit (215 aa).

The protein belongs to the LeuD family. LeuD type 1 subfamily. In terms of assembly, heterodimer of LeuC and LeuD.

The enzyme catalyses (2R,3S)-3-isopropylmalate = (2S)-2-isopropylmalate. The protein operates within amino-acid biosynthesis; L-leucine biosynthesis; L-leucine from 3-methyl-2-oxobutanoate: step 2/4. Catalyzes the isomerization between 2-isopropylmalate and 3-isopropylmalate, via the formation of 2-isopropylmaleate. The sequence is that of 3-isopropylmalate dehydratase small subunit from Polynucleobacter necessarius subsp. necessarius (strain STIR1).